The sequence spans 267 residues: 4-hydroxy-tetrahydrodipicolinate reductase (267 aa).

Position 10–15 (10–15 (GAGGKM)) interacts with NAD(+). Arginine 38 lines the NADP(+) pocket. NAD(+) is bound by residues 100-102 (GTT) and 126-129 (APNF). Histidine 156 functions as the Proton donor/acceptor in the catalytic mechanism. (S)-2,3,4,5-tetrahydrodipicolinate is bound at residue histidine 157. The active-site Proton donor is the lysine 160. 166–167 (GT) lines the (S)-2,3,4,5-tetrahydrodipicolinate pocket.

This sequence belongs to the DapB family.

The protein localises to the cytoplasm. It catalyses the reaction (S)-2,3,4,5-tetrahydrodipicolinate + NAD(+) + H2O = (2S,4S)-4-hydroxy-2,3,4,5-tetrahydrodipicolinate + NADH + H(+). The catalysed reaction is (S)-2,3,4,5-tetrahydrodipicolinate + NADP(+) + H2O = (2S,4S)-4-hydroxy-2,3,4,5-tetrahydrodipicolinate + NADPH + H(+). It functions in the pathway amino-acid biosynthesis; L-lysine biosynthesis via DAP pathway; (S)-tetrahydrodipicolinate from L-aspartate: step 4/4. Its function is as follows. Catalyzes the conversion of 4-hydroxy-tetrahydrodipicolinate (HTPA) to tetrahydrodipicolinate. This chain is 4-hydroxy-tetrahydrodipicolinate reductase, found in Desulfitobacterium hafniense (strain DSM 10664 / DCB-2).